Consider the following 620-residue polypeptide: Glutathione-regulated potassium-efflux system protein KefC (620 aa).

The next 12 helical transmembrane spans lie at 4 to 24 (HTLLQALIYLGSAALIVPIAV), 26 to 46 (LGLGSVLGYLIAGCIIGPWGL), 54 to 74 (SILHFAEIGVVLMLFVIGLEL), 90 to 110 (GALQMVVCGGLIGLFCMFLGL), 114 to 134 (VAELIGMTLALSSTAIAMQAM), 149 to 169 (FAVLLFQDIAAIPLVAMIPLL), 178 to 198 (LGAFALSALKVAGALALVVLL), 218 to 238 (VFSAVALFLVFGFGLLLEEVG), 270 to 290 (GLLLGLFFIGVGMSIDFGTLV), 294 to 314 (LRILLLLAGFLTIKIVMLWLV), 327 to 347 (WFAVLLGQGSEFAFVVFGAAQ), and 359 to 379 (ALTLAVALSMAATPIFLVLLT). One can recognise an RCK N-terminal domain in the interval 399-518 (QPRVIVAGFG…AGVAMPERET (120 aa)). The segment at 599–620 (QGTAEGKHSGEAADEPEVKPSI) is disordered.

Belongs to the monovalent cation:proton antiporter 2 (CPA2) transporter (TC 2.A.37) family. KefC subfamily. Homodimer. Interacts with the regulatory subunit KefF.

The protein resides in the cell inner membrane. Pore-forming subunit of a potassium efflux system that confers protection against electrophiles. Catalyzes K(+)/H(+) antiport. This chain is Glutathione-regulated potassium-efflux system protein KefC, found in Salmonella schwarzengrund (strain CVM19633).